Here is a 114-residue protein sequence, read N- to C-terminus: UPF0145 protein TTHA1944 (114 aa).

It belongs to the UPF0145 family.

The chain is UPF0145 protein TTHA1944 from Thermus thermophilus (strain ATCC 27634 / DSM 579 / HB8).